The primary structure comprises 187 residues: MVNEFEKLQSGKLLLASANLLESNFKRTVLIICEHNESGSLGFILNRPMEFKVCEAVAGFEEIEEPLHMGGPVQVDTVHFLHSRGDIIDGATEIFPGLFWGGDKNQVSFLLNTGVMQPSEIRFFLGYSGWSAGQLEEEFEIGSWYIAEASRDVIFSDAYERMWSRSVRSKGGEYQIVANAPELPGLN.

This sequence belongs to the UPF0301 (AlgH) family.

The chain is UPF0301 protein Cpha266_0885 from Chlorobium phaeobacteroides (strain DSM 266 / SMG 266 / 2430).